Reading from the N-terminus, the 358-residue chain is MPSTTLSTVLSDINEFVVKQGHGVKGLSELGLQTLPNQYVHPPEERLSSMDVVSDDSIPVIDVSNWEDPKVAKLICDAAEKRGFFQIVNHGIPLEMLEKAKAATYRFFREPAEEKKKYSKENCPTSHVRYSTSFLPQIEKALEWKDHLSMFYVSDEEAAQYWPPSCRDDALEYLKSCEMVSRKLLEALMQGLNVNEIDDAKESLLMGSRRININYYPKCPNPDLTVGVGRHSDISTLTLLLQDDIGGLYVRKLEHEAWSHVPPVKGALVINIGDALQIMSNGRYKSIEHRVLANETNDRISVPVFVNPKPNDIVGPLPEVLASGEKPVYKPVLYSDYAKHFYRKAHNGKDTIAFARIE.

Positions 207–308 (GSRRININYY…RISVPVFVNP (102 aa)) constitute a Fe2OG dioxygenase domain. Tyrosine 216 serves as a coordination point for 2-oxoglutarate. The Fe cation site is built by histidine 231, aspartate 233, and histidine 289. 2 residues coordinate 2-oxoglutarate: arginine 299 and serine 301.

It belongs to the iron/ascorbate-dependent oxidoreductase family. L-ascorbate serves as cofactor. It depends on Fe(2+) as a cofactor. As to expression, mostly expressed in underground stems and stems, and, at low levels, in tubers, leaves and petioles.

It catalyses the reaction (E)-4-coumaroyl-CoA + 2-oxoglutarate + O2 = (E)-2,4-dihydroxycinnamoyl-CoA + succinate + CO2. The catalysed reaction is (E)-feruloyl-CoA + 2-oxoglutarate + O2 = (E)-6-hydroxyferuloyl-CoA + succinate + CO2. Its pathway is phenylpropanoid metabolism. In terms of biological role, 2-oxoglutarate (OG)- and Fe(II)-dependent dioxygenase (2OGD) involved in scopoletin and umbelliferone biosynthesis. Converts feruloyl CoA into 6'-hydroxyferuloyl CoA, and p-coumaroyl CoA into 2,4-dihydroxycinnamoyl-CoA, but has no activity with caffeoyl-CoA. This is Bi-functional coumaroyl CoA and feruloyl CoA ortho-hydroxylase F6H2-1-1 from Ipomoea batatas (Sweet potato).